The primary structure comprises 170 residues: Large ribosomal subunit protein uL15 (170 aa).

Basic and acidic residues predominate over residues 1–12; it reads MKLHDLRPAEGA. The tract at residues 1–52 is disordered; that stretch reads MKLHDLRPAEGAHRKRKRIGRGHGSGKGKTGGKGMMGQKARSGPGPYRTFEG. Residues 13-26 are compositionally biased toward basic residues; that stretch reads HRKRKRIGRGHGSG.

It belongs to the universal ribosomal protein uL15 family. As to quaternary structure, part of the 50S ribosomal subunit.

In terms of biological role, binds to the 23S rRNA. This Chloroflexus aurantiacus (strain ATCC 29366 / DSM 635 / J-10-fl) protein is Large ribosomal subunit protein uL15.